The chain runs to 731 residues: NADH-ubiquinone oxidoreductase 75 kDa subunit, mitochondrial (731 aa).

The transit peptide at 1–27 directs the protein to the mitochondrion; sequence MIRAPLVKALGALGSPTHQMASRAVRT. The region spanning 40-118 is the 2Fe-2S ferredoxin-type domain; that stretch reads EKIEVFVDDI…GWRIKTNSDL (79 aa). 4 residues coordinate [2Fe-2S] cluster: Cys74, Cys85, Cys88, and Cys102. One can recognise a 4Fe-4S His(Cys)3-ligated-type domain in the interval 118-157; that stretch reads LTRKAREGVMEFLLMNHPLDCPICDQGGECDLQDQAMAFG. 8 residues coordinate [4Fe-4S] cluster: His134, Cys138, Cys141, Cys147, Cys190, Cys193, Cys196, and Cys240. The 4Fe-4S Mo/W bis-MGD-type domain maps to 259 to 315; that stretch reads IRKVSSIDVLDAVGSNIVVSTRTNEVLRILPRENEDVNEEWLADKSRFACDGLKRQR.

This sequence belongs to the complex I 75 kDa subunit family. As to quaternary structure, complex I is composed of about 45 different subunits. The cofactor is [2Fe-2S] cluster. [4Fe-4S] cluster is required as a cofactor.

Its subcellular location is the mitochondrion inner membrane. The catalysed reaction is a ubiquinone + NADH + 5 H(+)(in) = a ubiquinol + NAD(+) + 4 H(+)(out). Functionally, core subunit of the mitochondrial membrane respiratory chain NADH dehydrogenase (Complex I) that is believed to belong to the minimal assembly required for catalysis. Complex I functions in the transfer of electrons from NADH to the respiratory chain. The immediate electron acceptor for the enzyme is believed to be ubiquinone. This is the largest subunit of complex I and it is a component of the iron-sulfur (IP) fragment of the enzyme. It may form part of the active site crevice where NADH is oxidized. The chain is NADH-ubiquinone oxidoreductase 75 kDa subunit, mitochondrial from Drosophila melanogaster (Fruit fly).